The following is a 349-amino-acid chain: Crinkler effector protein 5 (349 aa).

A signal peptide spans 1 to 17 (MVKLFCSIVGVAGSPFS). The segment at 18–57 (VEVNEGKTVDDLKKAIKAENLDDPTLRNVAPKNLQLFLAK) is LQLFLAK domain. The segment at 58–108 (KGDAWLRYNEDLDTYLQSEIDTSSYLHMRASWKLSKPTLFGPDVSLGEDVV) is DWL domain. The short motif at 109–115 (HVLVVVP) is the HVLVXXP motif element.

Belongs to the Crinkler effector family.

The protein localises to the secreted. Its subcellular location is the host nucleus. In terms of biological role, secreted effector that elicits necrosis in host plants, a characteristic of plant innate immunity. The sequence is that of Crinkler effector protein 5 from Phytophthora infestans (Potato late blight agent).